The sequence spans 382 residues: Succinyl-diaminopimelate desuccinylase (382 aa).

Residue histidine 72 participates in Zn(2+) binding. Aspartate 74 is an active-site residue. Aspartate 105 provides a ligand contact to Zn(2+). The Proton acceptor role is filled by glutamate 139. The Zn(2+) site is built by glutamate 140, glutamate 168, and histidine 354.

It belongs to the peptidase M20A family. DapE subfamily. As to quaternary structure, homodimer. Zn(2+) serves as cofactor. Requires Co(2+) as cofactor.

It carries out the reaction N-succinyl-(2S,6S)-2,6-diaminopimelate + H2O = (2S,6S)-2,6-diaminopimelate + succinate. It participates in amino-acid biosynthesis; L-lysine biosynthesis via DAP pathway; LL-2,6-diaminopimelate from (S)-tetrahydrodipicolinate (succinylase route): step 3/3. Catalyzes the hydrolysis of N-succinyl-L,L-diaminopimelic acid (SDAP), forming succinate and LL-2,6-diaminopimelate (DAP), an intermediate involved in the bacterial biosynthesis of lysine and meso-diaminopimelic acid, an essential component of bacterial cell walls. This chain is Succinyl-diaminopimelate desuccinylase, found in Shewanella amazonensis (strain ATCC BAA-1098 / SB2B).